We begin with the raw amino-acid sequence, 487 residues long: MTHLPKLAIVGRPNVGKSALFNRICKQKIAIVDEAEGITRDRLYAEGELFGLHFQVIDTGGINARSKEVFNEEIKRQAEIAIEEADTIVQVVDAHVGLTELDKEVARVLLRTKKPVCLAVNKIDNLSQTSLMHQFHSLGIKQMIPVSAAQGWQIAELLETAFEKISREIESQETFSSIKVAIVGRANVGKSSLVNYLLDEDRCIVSPIPGTTRDSVDISFTHKDECYTLIDTAGIRRKRAEHEVVDKFAAIRTERAIERADLCVLMLDVQEGITAQDKKIANTIEEAGQGCIILLNKWDLVQGFRMEHCLQNLEEEVPFLRHCPKIFTSAKTGRNIDKLFPLIQEVYANSQKRITTHQLNKFIGEALQKNHPPMIQGKRLRIYYMAQVAVKPPKFILFVNYPNLMTDTYKKYLYNQFREAYAFTGVPILIHLKGKTKKDKPVSSLSLTRKQTKSTDQENNEYDELYQEQRVSDEDYYFENEEDLTEK.

2 EngA-type G domains span residues 5–169 and 178–351; these read PKLA…SREI and IKVA…ANSQ. Residues 11-18, 58-62, 121-124, 184-191, 231-235, and 296-299 contribute to the GTP site; these read GRPNVGKS, DTGGI, NKID, GRANVGKS, DTAGI, and NKWD. A KH-like domain is found at 352-439; sequence KRITTHQLNK…IHLKGKTKKD (88 aa). The tract at residues 441-466 is disordered; the sequence is PVSSLSLTRKQTKSTDQENNEYDELY.

Belongs to the TRAFAC class TrmE-Era-EngA-EngB-Septin-like GTPase superfamily. EngA (Der) GTPase family. Associates with the 50S ribosomal subunit.

Functionally, GTPase that plays an essential role in the late steps of ribosome biogenesis. The polypeptide is GTPase Der (Protochlamydia amoebophila (strain UWE25)).